A 200-amino-acid polypeptide reads, in one-letter code: Protein GrpE (200 aa).

The protein belongs to the GrpE family. As to quaternary structure, homodimer.

It is found in the cytoplasm. In terms of biological role, participates actively in the response to hyperosmotic and heat shock by preventing the aggregation of stress-denatured proteins, in association with DnaK and GrpE. It is the nucleotide exchange factor for DnaK and may function as a thermosensor. Unfolded proteins bind initially to DnaJ; upon interaction with the DnaJ-bound protein, DnaK hydrolyzes its bound ATP, resulting in the formation of a stable complex. GrpE releases ADP from DnaK; ATP binding to DnaK triggers the release of the substrate protein, thus completing the reaction cycle. Several rounds of ATP-dependent interactions between DnaJ, DnaK and GrpE are required for fully efficient folding. The chain is Protein GrpE from Shewanella piezotolerans (strain WP3 / JCM 13877).